The chain runs to 160 residues: SsrA-binding protein (160 aa).

Residues 136–160 (KRDTVRERDSNRELQRAVRNKGKED) form a disordered region.

It belongs to the SmpB family.

Its subcellular location is the cytoplasm. Functionally, required for rescue of stalled ribosomes mediated by trans-translation. Binds to transfer-messenger RNA (tmRNA), required for stable association of tmRNA with ribosomes. tmRNA and SmpB together mimic tRNA shape, replacing the anticodon stem-loop with SmpB. tmRNA is encoded by the ssrA gene; the 2 termini fold to resemble tRNA(Ala) and it encodes a 'tag peptide', a short internal open reading frame. During trans-translation Ala-aminoacylated tmRNA acts like a tRNA, entering the A-site of stalled ribosomes, displacing the stalled mRNA. The ribosome then switches to translate the ORF on the tmRNA; the nascent peptide is terminated with the 'tag peptide' encoded by the tmRNA and targeted for degradation. The ribosome is freed to recommence translation, which seems to be the essential function of trans-translation. This is SsrA-binding protein from Pseudomonas putida (strain W619).